The sequence spans 354 residues: UDP-N-acetylglucosamine--N-acetylmuramyl-(pentapeptide) pyrophosphoryl-undecaprenol N-acetylglucosamine transferase (354 aa).

Residues 15-17 (TGG), Asn-127, Arg-163, Ser-191, Ile-244, 263-268 (ALTVSE), and Gln-288 contribute to the UDP-N-acetyl-alpha-D-glucosamine site.

It belongs to the glycosyltransferase 28 family. MurG subfamily.

The protein resides in the cell inner membrane. It catalyses the reaction di-trans,octa-cis-undecaprenyl diphospho-N-acetyl-alpha-D-muramoyl-L-alanyl-D-glutamyl-meso-2,6-diaminopimeloyl-D-alanyl-D-alanine + UDP-N-acetyl-alpha-D-glucosamine = di-trans,octa-cis-undecaprenyl diphospho-[N-acetyl-alpha-D-glucosaminyl-(1-&gt;4)]-N-acetyl-alpha-D-muramoyl-L-alanyl-D-glutamyl-meso-2,6-diaminopimeloyl-D-alanyl-D-alanine + UDP + H(+). It functions in the pathway cell wall biogenesis; peptidoglycan biosynthesis. Functionally, cell wall formation. Catalyzes the transfer of a GlcNAc subunit on undecaprenyl-pyrophosphoryl-MurNAc-pentapeptide (lipid intermediate I) to form undecaprenyl-pyrophosphoryl-MurNAc-(pentapeptide)GlcNAc (lipid intermediate II). The protein is UDP-N-acetylglucosamine--N-acetylmuramyl-(pentapeptide) pyrophosphoryl-undecaprenol N-acetylglucosamine transferase of Aliivibrio fischeri (strain ATCC 700601 / ES114) (Vibrio fischeri).